A 380-amino-acid polypeptide reads, in one-letter code: L-lactate dehydrogenase (380 aa).

The region spanning 1–380 (MIISSTTDFR…DRSILAKTDR (380 aa)) is the FMN hydroxy acid dehydrogenase domain. Residue tyrosine 24 participates in substrate binding. FMN is bound by residues serine 106 and glutamine 127. Tyrosine 129 contacts substrate. FMN is bound at residue threonine 155. Arginine 164 is a substrate binding site. Position 251 (lysine 251) interacts with FMN. Residue histidine 275 is the Proton acceptor of the active site. Arginine 278 lines the substrate pocket. An FMN-binding site is contributed by 306–330 (DGGVRSGLDVVRMLALGAKGVLLGR).

Belongs to the FMN-dependent alpha-hydroxy acid dehydrogenase family. Requires FMN as cofactor.

Its subcellular location is the cell inner membrane. It carries out the reaction (S)-lactate + A = pyruvate + AH2. Its function is as follows. Catalyzes the conversion of L-lactate to pyruvate. Is coupled to the respiratory chain. The protein is L-lactate dehydrogenase of Caulobacter sp. (strain K31).